A 562-amino-acid chain; its full sequence is Protein FAM83D-B (562 aa).

The tract at residues 424–472 is disordered; that stretch reads ITTQTTETSQCTTQTPAPTSSVARLSNSSNSSSSSFSSASTTSTGSNCS. Positions 425–472 are enriched in low complexity; it reads TTQTTETSQCTTQTPAPTSSVARLSNSSNSSSSSFSSASTTSTGSNCS.

This sequence belongs to the FAM83 family.

Its subcellular location is the cytoplasm. It localises to the cytoskeleton. The protein resides in the spindle. The protein localises to the spindle pole. In terms of biological role, may regulate cell proliferation, growth, migration and epithelial to mesenchymal transition. May also be important for proper chromosome congression and alignment during mitosis. This is Protein FAM83D-B from Xenopus laevis (African clawed frog).